The following is a 763-amino-acid chain: Amyloid beta precursor like protein 2 (763 aa).

The signal sequence occupies residues 1-31 (MAATGTAAAAATGRLLLLLLVGLTAPALALA). Residues 32–692 (GYIEALAANA…PLREDFSLSS (661 aa)) are Extracellular-facing. The interval 46-139 (AVAEPQIAMF…PFKCLVGEFV (94 aa)) is GFLD subdomain. Residues 46 to 205 (AVAEPQIAMF…HGTEYVCCPQ (160 aa)) enclose the E1 domain. 6 disulfides stabilise this stretch: C56-C80, C91-C133, C116-C123, C149-C203, C160-C190, and C174-C202. The tract at residues 147–205 (EKCQFFHKERMEVCENHQHWHTVVKEACLTQGMTLYSYGMLLPCGVDQFHGTEYVCCPQ) is cuBD subdomain. Residues H163, H167, and Y184 each contribute to the Cu cation site. The interval 211 to 299 (SVSKEEEEED…EPGSDGTMSD (89 aa)) is disordered. Composition is skewed to acidic residues over residues 215-233 (EEEE…EEDY) and 242-269 (TEAD…EVVE). Positions 270–282 (DRDYYYDTFKGDD) are enriched in basic and acidic residues. The BPTI/Kunitz inhibitor domain maps to 306 to 364 (VKAVCSQEAMTGPCRAVMPRWYFDLSKGKCVRFIYGGCGGNRNNFESEDYCMAVCKAMI). Disulfide bonds link C310/C360, C319/C343, and C335/C356. Residues 373–564 (DVDVYFETSA…QEIQEEIDEL (192 aa)) form the E2 domain. At S590 the chain carries Phosphoserine; by FAM20C. O-linked (Xyl...) (chondroitin sulfate) serine glycosylation occurs at S626. The helical transmembrane segment at 693-716 (SALIGLLVIAVAIATVIVISLVML) threads the bilayer. The Cytoplasmic segment spans residues 717 to 763 (RKRQYGTISHGIVEVDPMLTPEERHLNKMQNHGYENPTYKYLEQMQI). The interaction with DAB2 stretch occupies residues 749-763 (GYENPTYKYLEQMQI). Positions 750 to 755 (YENPTY) match the NPXY motif motif.

It belongs to the APP family. Interacts with CPEB1. Interacts (via NPXY motif) with DAB2 (via PID domain); the interaction is impaired by tyrosine phosphorylation of the NPXY motif. Interacts (via cytoplasmic domain) with APBB2/FE65L. Interacts (via intracellular domain) with APBB3/FE65L2. Post-translationally, the BPTI/Kunitz inhibitor domain is O-glycosylated. As to expression, expressed in placenta, brain, heart, lung, liver, kidney and endothelial tissues.

Its subcellular location is the cell membrane. The protein resides in the nucleus. In terms of biological role, may play a role in the regulation of hemostasis. The soluble form may have inhibitory properties towards coagulation factors. May interact with cellular G-protein signaling pathways. May bind to the DNA 5'-GTCACATG-3'(CDEI box). Inhibits trypsin, chymotrypsin, plasmin, factor XIA and plasma and glandular kallikrein. Modulates the Cu/Zn nitric oxide-catalyzed autodegradation of GPC1 heparan sulfate side chains in fibroblasts. The chain is Amyloid beta precursor like protein 2 from Homo sapiens (Human).